We begin with the raw amino-acid sequence, 358 residues long: 3-dehydroquinate synthase (358 aa).

Residues Asp70–Lys75, Gly104–Asp108, Thr128–Thr129, Lys141, Lys150, and Cys168–Thr171 contribute to the NAD(+) site. Zn(2+) contacts are provided by Glu183, His246, and His263.

The protein belongs to the sugar phosphate cyclases superfamily. Dehydroquinate synthase family. The cofactor is Co(2+). Zn(2+) serves as cofactor. Requires NAD(+) as cofactor.

It is found in the cytoplasm. It carries out the reaction 7-phospho-2-dehydro-3-deoxy-D-arabino-heptonate = 3-dehydroquinate + phosphate. The protein operates within metabolic intermediate biosynthesis; chorismate biosynthesis; chorismate from D-erythrose 4-phosphate and phosphoenolpyruvate: step 2/7. Catalyzes the conversion of 3-deoxy-D-arabino-heptulosonate 7-phosphate (DAHP) to dehydroquinate (DHQ). This chain is 3-dehydroquinate synthase, found in Shewanella woodyi (strain ATCC 51908 / MS32).